Consider the following 853-residue polypeptide: Thrombospondin type-1 domain-containing protein 1 (853 aa).

An N-terminal signal peptide occupies residues 1 to 24; the sequence is MKPMLKDFSNLLLVVLCDYVLGEA. Topologically, residues 25 to 414 are extracellular; it reads EYLLLREPGH…QPQGPVKSNN (390 aa). Residues N39, N53, N58, N69, N80, N135, and N304 are each glycosylated (N-linked (GlcNAc...) asparagine). The TSP type-1 domain maps to 341–394; the sequence is IETWGLWQPWSQCSATCGDGVRERRRVCLTSFPSRPGCPGMSLEASLCSLEECA. Cystine bridges form between C353/C388, C357/C393, and C368/C378. Residues 415–435 traverse the membrane as a helical segment; the sequence is IVTVTGISLCLFIIIATVLIT. Residues 436–853 lie on the Cytoplasmic side of the membrane; it reads LWRRFGRPAK…STLSVEKLVI (418 aa). Disordered stretches follow at residues 445 to 518, 624 to 650, 668 to 702, and 714 to 800; these read KCST…ESFQ, TLIR…RNAH, ERSM…QSRG, and QEAS…RKDK. At S464 the chain carries Phosphoserine. A compositionally biased stretch (polar residues) spans 671-686; the sequence is MSTLTPRQAPAYSTRT. Residues 687-697 show a composition bias toward basic and acidic residues; that stretch reads RTCEQAEDRFR. A compositionally biased stretch (polar residues) spans 767–795; sequence SHKSVSRKQSSPTSPKDSYQRVSPLSPSQ.

As to quaternary structure, part of a complex composed of THSD1, PTK2/FAK1, TLN1 and VCL. Interacts with TLN1.

The protein localises to the endosome membrane. It localises to the cell junction. It is found in the focal adhesion. Its function is as follows. Is a positive regulator of nascent focal adhesion assembly, involved in the modulation of endothelial cell attachment to the extracellular matrix. In Pongo abelii (Sumatran orangutan), this protein is Thrombospondin type-1 domain-containing protein 1 (THSD1).